A 74-amino-acid chain; its full sequence is Ubiquitin-like protein FUBI (74 aa).

Belongs to the ubiquitin family.

In terms of biological role, confers arsenite resistance. In Cricetulus griseus (Chinese hamster), this protein is Ubiquitin-like protein FUBI (FAU).